The following is a 259-amino-acid chain: Thiazole synthase (259 aa).

The Schiff-base intermediate with DXP role is filled by Lys100. Residues Gly161, 187–188 (AG), and 209–210 (NT) each bind 1-deoxy-D-xylulose 5-phosphate.

Belongs to the ThiG family. Homotetramer. Forms heterodimers with either ThiH or ThiS.

Its subcellular location is the cytoplasm. It carries out the reaction [ThiS sulfur-carrier protein]-C-terminal-Gly-aminoethanethioate + 2-iminoacetate + 1-deoxy-D-xylulose 5-phosphate = [ThiS sulfur-carrier protein]-C-terminal Gly-Gly + 2-[(2R,5Z)-2-carboxy-4-methylthiazol-5(2H)-ylidene]ethyl phosphate + 2 H2O + H(+). The protein operates within cofactor biosynthesis; thiamine diphosphate biosynthesis. Functionally, catalyzes the rearrangement of 1-deoxy-D-xylulose 5-phosphate (DXP) to produce the thiazole phosphate moiety of thiamine. Sulfur is provided by the thiocarboxylate moiety of the carrier protein ThiS. In vitro, sulfur can be provided by H(2)S. This is Thiazole synthase from Halalkalibacterium halodurans (strain ATCC BAA-125 / DSM 18197 / FERM 7344 / JCM 9153 / C-125) (Bacillus halodurans).